A 910-amino-acid polypeptide reads, in one-letter code: DnaJ-like protein MG200 homolog (910 aa).

The region spanning 4-73 (AKRDYYEVLG…RANYDKYGHD (70 aa)) is the J domain. 3 disordered regions span residues 102-160 (DNLS…DDIP), 260-408 (TEPS…LEQD), and 451-486 (VLSDQNPNPQTPTHHEEDAAAPEPTVDETSGESTAP). Positions 111–121 (KKEKTKTKKKG) are enriched in basic residues. Positions 273-283 (DSDAVTAATTV) are enriched in low complexity. Residues 357-379 (SDEADATNEPTEQDTISEPEQET) show a composition bias toward acidic residues. The span at 451–462 (VLSDQNPNPQTP) shows a compositional bias: polar residues.

The protein is DnaJ-like protein MG200 homolog of Mycoplasma pneumoniae (strain ATCC 29342 / M129 / Subtype 1) (Mycoplasmoides pneumoniae).